The following is a 485-amino-acid chain: Cyclic GMP-AMP synthase-like receptor (485 aa).

ATP contacts are provided by residues S70 and 82-84 (EYD). Residues E82, D84, and D204 each contribute to the Mg(2+) site. GTP-binding positions include D204 and 247-254 (RLSFYEQE). 2 residues coordinate ATP: K271 and K274. Residues I298 and D304 each contribute to the Mn(2+) site.

It belongs to the mab-21 family. The cofactor is Mg(2+). Requires Mn(2+) as cofactor.

It carries out the reaction GTP + ATP = 2',3'-cGAMP + 2 diphosphate. It catalyses the reaction GTP + ATP = pppGp(2'-5')A + diphosphate. The catalysed reaction is pppGp(2'-5')A = 2',3'-cGAMP + diphosphate. In terms of biological role, nucleotidyltransferase that catalyzes the formation of cyclic GMP-AMP (2',3'-cGAMP) from ATP and GTP and plays a key role in innate immunity. Directly binds some unknown ligand, activating the nucleotidyltransferase activity, leading to synthesis of 2',3'-cGAMP, a second messenger that binds to and activates Sting, thereby triggering the immune response via activation of the NF-kappa-B transcription factor. This chain is Cyclic GMP-AMP synthase-like receptor, found in Trichogramma pretiosum (Parasitoid wasp).